The following is a 61-amino-acid chain: Acetylcholinesterase toxin C (61 aa).

4 disulfides stabilise this stretch: C3-C22, C17-C39, C41-C52, and C53-C59.

The protein belongs to the three-finger toxin family. Short-chain subfamily. Acn-esterase inhibitor sub-subfamily. As to expression, expressed by the venom gland.

The protein resides in the secreted. Its function is as follows. Inhibits acetylcholinesterase. This Dendroaspis polylepis polylepis (Black mamba) protein is Acetylcholinesterase toxin C.